The chain runs to 641 residues: Fructose-1,6-bisphosphatase class 3 (641 aa).

Belongs to the FBPase class 3 family. The cofactor is Mn(2+).

The catalysed reaction is beta-D-fructose 1,6-bisphosphate + H2O = beta-D-fructose 6-phosphate + phosphate. It participates in carbohydrate biosynthesis; gluconeogenesis. The chain is Fructose-1,6-bisphosphatase class 3 from Bacillus velezensis (strain DSM 23117 / BGSC 10A6 / LMG 26770 / FZB42) (Bacillus amyloliquefaciens subsp. plantarum).